Consider the following 70-residue polypeptide: MIYKVYYQETKIRNPKREDTKSLYMEADSDVIVRQLVEENTPYNIEYVQLLDEKHLAYEQEHADFTLTEF.

It belongs to the RNA polymerase subunit epsilon family. As to quaternary structure, RNAP is composed of a core of 2 alpha, a beta and a beta' subunit. The core is associated with a delta subunit, and at least one of epsilon or omega. When a sigma factor is associated with the core the holoenzyme is formed, which can initiate transcription.

It catalyses the reaction RNA(n) + a ribonucleoside 5'-triphosphate = RNA(n+1) + diphosphate. In terms of biological role, a non-essential component of RNA polymerase (RNAP). The chain is DNA-directed RNA polymerase subunit epsilon from Enterococcus faecalis (strain ATCC 700802 / V583).